Reading from the N-terminus, the 384-residue chain is MNMKTLLTYATLLSVTAFSHVVYADNQWPDLPTGFKDGVGAQVGSKVYVGLGSLGKSFYVLDLNALSKGWQKIADFTGAERSGATASVIGNYIYLFGGSGKAEPSDPSPILFDSVYRYDTKKDSWEKMNTTSPVGLLGASSYSPDNRQILFFGGYNKAYFDRYLRDISTTDKQVNPEVWQRIVDDYMGMTPTDYKWNRNVISYLPEKQEWRDLGVSTYLPNCGSATVIEGNKVTLISGEIKPGLRTAEVKQYEFGMDQPWKSLLPLPAPQTSNIQEGVAGAFSGKTNGVVVVAGGANFHGAKQAFENGKMFAHEGLPKAFNSEIYVEKEGIWSTVNSLPEGLAYGASFTTSEGVLIVGGEKSGKEMSHKVYMLAWNGSTVEVID.

Positions 1 to 24 (MNMKTLLTYATLLSVTAFSHVVYA) are cleaved as a signal peptide. 7 Kelch repeats span residues 46 to 90 (KVYV…SVIG), 92 to 145 (YIYL…YSPD), 147 to 184 (RQIL…RIVD), 185 to 230 (DYMG…VIEG), 233 to 281 (VTLI…VAGA), 303 to 352 (QAFE…TTSE), and 354 to 383 (VLIV…VEVI). Glutamate 239 acts as the Proton acceptor in catalysis.

The protein belongs to the NanM family. Homodimer.

Its subcellular location is the periplasm. The enzyme catalyses N-acetyl-alpha-neuraminate = N-acetyl-beta-neuraminate. Its function is as follows. Converts alpha-N-acetylneuranimic acid (Neu5Ac) to the beta-anomer, accelerating the equilibrium between the alpha- and beta-anomers. Probably facilitates sialidase-negative bacteria to compete successfully for limited amounts of extracellular Neu5Ac, which is likely taken up in the beta-anomer. In addition, the rapid removal of sialic acid from solution might be advantageous to the bacterium to damp down host responses. This is N-acetylneuraminate epimerase from Vibrio cholerae serotype O1 (strain ATCC 39315 / El Tor Inaba N16961).